Consider the following 382-residue polypeptide: UDP-N-acetylglucosamine--N-acetylmuramyl-(pentapeptide) pyrophosphoryl-undecaprenol N-acetylglucosamine transferase (382 aa).

Residues 11-13 (TGG), Asn117, Arg160, Ser209, and Gln311 contribute to the UDP-N-acetyl-alpha-D-glucosamine site.

The protein belongs to the glycosyltransferase 28 family. MurG subfamily.

It is found in the cell inner membrane. The enzyme catalyses di-trans,octa-cis-undecaprenyl diphospho-N-acetyl-alpha-D-muramoyl-L-alanyl-D-glutamyl-meso-2,6-diaminopimeloyl-D-alanyl-D-alanine + UDP-N-acetyl-alpha-D-glucosamine = di-trans,octa-cis-undecaprenyl diphospho-[N-acetyl-alpha-D-glucosaminyl-(1-&gt;4)]-N-acetyl-alpha-D-muramoyl-L-alanyl-D-glutamyl-meso-2,6-diaminopimeloyl-D-alanyl-D-alanine + UDP + H(+). The protein operates within cell wall biogenesis; peptidoglycan biosynthesis. Cell wall formation. Catalyzes the transfer of a GlcNAc subunit on undecaprenyl-pyrophosphoryl-MurNAc-pentapeptide (lipid intermediate I) to form undecaprenyl-pyrophosphoryl-MurNAc-(pentapeptide)GlcNAc (lipid intermediate II). The protein is UDP-N-acetylglucosamine--N-acetylmuramyl-(pentapeptide) pyrophosphoryl-undecaprenol N-acetylglucosamine transferase of Rickettsia akari (strain Hartford).